The primary structure comprises 334 residues: Ferric enterobactin transport system permease protein FepD (334 aa).

The Periplasmic portion of the chain corresponds to 1-9 (MSGSVAVTR). Residues 10–30 (AIAVPGLLLLLIIATALSLLI) traverse the membrane as a helical segment. Over 31-63 (GAKSLPASVVLEAFSGTCQSADCTIVLDARLPR) the chain is Cytoplasmic. A helical membrane pass occupies residues 64 to 84 (TLAGLLAGGALGLAGALMQTL). Over 85 to 92 (TRNPLADP) the chain is Periplasmic. Residues 93 to 113 (GLLGVNAGASFAIVLGAALFG) form a helical membrane-spanning segment. Residues 114-120 (YSSAQEQ) lie on the Cytoplasmic side of the membrane. Residues 121-141 (LAMAFAGALVASLIVAFTGSQ) traverse the membrane as a helical segment. Residues 142–151 (GGGQLSPVRL) are Periplasmic-facing. Residues 152 to 172 (TLAGVALAAVLEGLTSGIALL) form a helical membrane-spanning segment. Residues 173 to 192 (NPDVYDQLRFWQAGSLDIRN) lie on the Cytoplasmic side of the membrane. The chain crosses the membrane as a helical span at residues 193-213 (LHTLKVVLIPVLIAGATALLL). Residues 214-241 (SRALNSLSLGSDTATALGSRVARTQLIG) lie on the Periplasmic side of the membrane. The helical transmembrane segment at 242–262 (LLAITVLCGSATAIVGPIAFI) threads the bilayer. The Cytoplasmic segment spans residues 263-279 (GLMMPHMARWLVGADHR). A helical membrane pass occupies residues 280-300 (WSLPVTLLATPALLLFADIIG). The Periplasmic portion of the chain corresponds to 301 to 305 (RVIVP). A helical membrane pass occupies residues 306-326 (GELRVSVVSAFIGAPVLIFLV). The Cytoplasmic segment spans residues 327–334 (RRKTRGGA).

It belongs to the binding-protein-dependent transport system permease family. FecCD subfamily. In terms of assembly, the complex is composed of two ATP-binding proteins (FepC), two transmembrane proteins (FepD and FepG) and a solute-binding protein (FepB).

The protein resides in the cell inner membrane. Part of the ABC transporter complex FepBDGC involved in ferric enterobactin uptake. Responsible for the translocation of the substrate across the membrane. The polypeptide is Ferric enterobactin transport system permease protein FepD (fepD) (Escherichia coli (strain K12)).